A 139-amino-acid chain; its full sequence is ATP synthase epsilon chain (139 aa).

Belongs to the ATPase epsilon chain family. F-type ATPases have 2 components, CF(1) - the catalytic core - and CF(0) - the membrane proton channel. CF(1) has five subunits: alpha(3), beta(3), gamma(1), delta(1), epsilon(1). CF(0) has three main subunits: a, b and c.

It is found in the cell inner membrane. Functionally, produces ATP from ADP in the presence of a proton gradient across the membrane. In Acinetobacter baumannii (strain SDF), this protein is ATP synthase epsilon chain.